We begin with the raw amino-acid sequence, 2185 residues long: Genome polyprotein (2185 aa).

Gly-2 carries N-myristoyl glycine; by host lipidation. At 2-1495 (GAQVSTQKTG…HVNRAFICLQ (1494 aa)) the chain is on the cytoplasmic side. The interval 566–582 (FFQGPPGEVMGRAIARV) is amphipathic alpha-helix. Active-site for protease 2A activity residues include His-872 and Asp-890. Residues Cys-907 and Cys-909 each contribute to the Zn(2+) site. Cys-961 (for protease 2A activity) is an active-site residue. Zn(2+)-binding residues include Cys-967 and His-969. Residues 1101 to 1173 (NSGWLKKFTE…EQSAPSQSDQ (73 aa)) form a membrane-binding region. Residues 1101–1239 (NSGWLKKFTE…SPGAGKSVAT (139 aa)) form an oligomerization region. Residues 1122 to 1126 (AIKIQ) form an RNA-binding region. Residues 1205–1361 (EKKMSNYIQF…SMYSQNGKIN (157 aa)) enclose the SF3 helicase domain. The Zn(2+) site is built by Cys-1369, Cys-1381, and Cys-1386. The C4-type; degenerate zinc finger occupies 1369–1386 (CDEECCPVNFKKCCPLVC). An RNA-binding region spans residues 1413 to 1420 (EYNHRHSV). The segment at 1424–1429 (LEALFQ) is oligomerization. The stretch at 1496–1511 (ALTTFVSVAGIIYIIY) is an intramembrane region. Topologically, residues 1512-2185 (KLFAGFQGAY…TLRRKWLDSF (674 aa)) are cytoplasmic. The residue at position 1521 (Tyr-1521) is an O-(5'-phospho-RNA)-tyrosine. A Peptidase C3 domain is found at 1541–1719 (GPAFEFAVAM…FSAALLRHYF (179 aa)). Residues His-1580, Glu-1611, and Cys-1687 each act as for protease 3C activity in the active site. The RdRp catalytic domain occupies 1950–2066 (GHLIAFDYSG…SYPWPIDASL (117 aa)). Mg(2+) contacts are provided by Asp-1956 and Asp-2052.

It belongs to the picornaviruses polyprotein family. In terms of assembly, interacts with capsid protein VP1 and capsid protein VP3 to form heterotrimeric protomers. Interacts with capsid protein VP0, and capsid protein VP3 to form heterotrimeric protomers. Five protomers subsequently associate to form pentamers which serve as building blocks for the capsid. Interacts with capsid protein VP2, capsid protein VP3 and capsid protein VP4 following cleavage of capsid protein VP0. Interacts with host CXADR. As to quaternary structure, interacts with capsid protein VP1 and capsid protein VP3 in the mature capsid. In terms of assembly, interacts with capsid protein VP0 and capsid protein VP1 to form heterotrimeric protomers. Five protomers subsequently associate to form pentamers which serve as building blocks for the capsid. Interacts with capsid protein VP4 in the mature capsid. Interacts with protein 2C; this interaction may be important for virion morphogenesis. Interacts with capsid protein VP1 and capsid protein VP3. As to quaternary structure, homodimer. In terms of assembly, homohexamer; forms a hexameric ring structure with 6-fold symmetry characteristic of AAA+ ATPases. Interacts (via N-terminus) with host RTN3 (via reticulon domain); this interaction is important for viral replication. Interacts with capsid protein VP3; this interaction may be important for virion morphogenesis. Interacts with protein 3CD. As to quaternary structure, homodimer. Interacts with host GBF1. Interacts (via GOLD domain) with host ACBD3 (via GOLD domain); this interaction allows the formation of a viral protein 3A/ACBD3 heterotetramer with a 2:2 stoichiometry, which will stimulate the recruitment of host PI4KB in order to synthesize PI4P at the viral RNA replication sites. In terms of assembly, interacts with RNA-directed RNA polymerase. Interacts with protein 3AB and with RNA-directed RNA polymerase. As to quaternary structure, interacts with Viral protein genome-linked and with protein 3CD. Mg(2+) serves as cofactor. Post-translationally, specific enzymatic cleavages in vivo by the viral proteases yield processing intermediates and the mature proteins. Myristoylation is required for the formation of pentamers during virus assembly. Further assembly of 12 pentamers and a molecule of genomic RNA generates the provirion. In terms of processing, during virion maturation, immature virions are rendered infectious following cleavage of VP0 into VP4 and VP2. This maturation seems to be an autocatalytic event triggered by the presence of RNA in the capsid and it is followed by a conformational change infectious virion. Post-translationally, myristoylation is required during RNA encapsidation and formation of the mature virus particle. VPg is uridylylated by the polymerase into VPg-pUpU. This acts as a nucleotide-peptide primer for the genomic RNA replication.

The protein resides in the virion. The protein localises to the host cytoplasm. It localises to the host cytoplasmic vesicle membrane. It is found in the host nucleus. It catalyses the reaction a ribonucleoside 5'-triphosphate + H2O = a ribonucleoside 5'-diphosphate + phosphate + H(+). The enzyme catalyses Selective cleavage of Tyr-|-Gly bond in the picornavirus polyprotein.. It carries out the reaction RNA(n) + a ribonucleoside 5'-triphosphate = RNA(n+1) + diphosphate. The catalysed reaction is Selective cleavage of Gln-|-Gly bond in the poliovirus polyprotein. In other picornavirus reactions Glu may be substituted for Gln, and Ser or Thr for Gly.. Replication or transcription is subject to high level of random mutations by the nucleotide analog ribavirin. In terms of biological role, forms an icosahedral capsid of pseudo T=3 symmetry with capsid proteins VP2 and VP3. The capsid is 300 Angstroms in diameter, composed of 60 copies of each capsid protein and enclosing the viral positive strand RNA genome. Capsid protein VP1 mainly forms the vertices of the capsid. Capsid protein VP1 interacts with host CXADR to provide virion attachment to target host cells. This attachment induces virion internalization. Tyrosine kinases are probably involved in the entry process. After binding to its receptor, the capsid undergoes conformational changes. Capsid protein VP1 N-terminus (that contains an amphipathic alpha-helix) and capsid protein VP4 are externalized. Together, they shape a pore in the host membrane through which viral genome is translocated to host cell cytoplasm. Its function is as follows. Forms an icosahedral capsid of pseudo T=3 symmetry with capsid proteins VP2 and VP3. The capsid is 300 Angstroms in diameter, composed of 60 copies of each capsid protein and enclosing the viral positive strand RNA genome. Lies on the inner surface of the capsid shell. After binding to the host receptor, the capsid undergoes conformational changes. Capsid protein VP4 is released, Capsid protein VP1 N-terminus is externalized, and together, they shape a pore in the host membrane through which the viral genome is translocated into the host cell cytoplasm. Functionally, component of immature procapsids, which is cleaved into capsid proteins VP4 and VP2 after maturation. Allows the capsid to remain inactive before the maturation step. In terms of biological role, cysteine protease that cleaves viral polyprotein and specific host proteins. It is responsible for the autocatalytic cleavage between the P1 and P2 regions, which is the first cleavage occurring in the polyprotein. Also cleaves the host translation initiation factor EIF4G1, in order to shut down the capped cellular mRNA translation. Inhibits the host nucleus-cytoplasm protein and RNA trafficking by cleaving host members of the nuclear pores. Counteracts stress granule formation probably by antagonizing its assembly or promoting its dissassembly. Its function is as follows. Plays an essential role in the virus replication cycle by acting as a viroporin. Creates a pore in the host endoplasmic reticulum and as a consequence releases Ca2+ in the cytoplasm of infected cell. In turn, high levels of cytoplasmic calcium may trigger membrane trafficking and transport of viral ER-associated proteins to viroplasms, sites of viral genome replication. Induces and associates with structural rearrangements of intracellular membranes. Displays RNA-binding, nucleotide binding and NTPase activities. May play a role in virion morphogenesis and viral RNA encapsidation by interacting with the capsid protein VP3. Functionally, localizes the viral replication complex to the surface of membranous vesicles. Together with protein 3CD binds the Cis-Active RNA Element (CRE) which is involved in RNA synthesis initiation. Acts as a cofactor to stimulate the activity of 3D polymerase, maybe through a nucleid acid chaperone activity. In terms of biological role, localizes the viral replication complex to the surface of membranous vesicles. It inhibits host cell endoplasmic reticulum-to-Golgi apparatus transport and causes the disassembly of the Golgi complex, possibly through GBF1 interaction. This would result in depletion of MHC, trail receptors and IFN receptors at the host cell surface. Plays an essential role in viral RNA replication by recruiting ACBD3 and PI4KB at the viral replication sites, thereby allowing the formation of the rearranged membranous structures where viral replication takes place. Its function is as follows. Acts as a primer for viral RNA replication and remains covalently bound to viral genomic RNA. VPg is uridylylated prior to priming replication into VPg-pUpU. The oriI viral genomic sequence may act as a template for this. The VPg-pUpU is then used as primer on the genomic RNA poly(A) by the RNA-dependent RNA polymerase to replicate the viral genome. During genome replication, the VPg-RNA linkage is removed by the host TDP2, thereby accelerating replication. During the late stage of the replication cycle, host TDP2 is excluded from sites of viral RNA synthesis and encapsidation, allowing for the generation of progeny virions. Involved in the viral replication complex and viral polypeptide maturation. It exhibits protease activity with a specificity and catalytic efficiency that is different from protease 3C. Protein 3CD lacks polymerase activity. Protein 3CD binds to the 5'UTR of the viral genome. Functionally, replicates the viral genomic RNA on the surface of intracellular membranes. May form linear arrays of subunits that propagate along a strong head-to-tail interaction called interface-I. Covalently attaches UMP to a tyrosine of VPg, which is used to prime RNA synthesis. The positive stranded RNA genome is first replicated at virus induced membranous vesicles, creating a dsRNA genomic replication form. This dsRNA is then used as template to synthesize positive stranded RNA genomes. ss(+)RNA genomes are either translated, replicated or encapsidated. In terms of biological role, major viral protease that mediates proteolytic processing of the polyprotein. Cleaves host EIF5B, contributing to host translation shutoff. Also cleaves host PABPC1, contributing to host translation shutoff. Cleaves host NLRP1, triggers host N-glycine-mediated degradation of the autoinhibitory NLRP1 N-terminal fragment. This Sus scrofa (Pig) protein is Genome polyprotein.